The primary structure comprises 1560 residues: uncharacterized protein (1560 aa).

The interval 1 to 46 (MEEIENAHYQNLENFNDETSEDVNDTSDDINKNNDDNNKYDDNNVN) is disordered. The segment covering 15–28 (FNDETSEDVNDTSD) has biased composition (acidic residues). The span at 29–46 (DINKNNDDNNKYDDNNVN) shows a compositional bias: basic and acidic residues. Coiled-coil stretches lie at residues 36 to 60 (DNNK…EEDN) and 317 to 359 (KKNN…NNNN). The tract at residues 568-594 (KKKKKKNDHHERDSDNNNNDSNNNNYY) is disordered. Residues 583 to 594 (NNNNDSNNNNYY) show a composition bias toward low complexity. Residues 1188-1239 (DTTNNILNKQNESLDNLKKNMYLSKNNYDNQLSSYKNTKQNKTNINEKYNNN) adopt a coiled-coil conformation. The next 2 membrane-spanning stretches (helical) occupy residues 1271–1291 (LYIS…FILL) and 1314–1334 (LDYF…ILIS).

The protein resides in the membrane. This is an uncharacterized protein from Plasmodium falciparum (isolate 3D7).